The primary structure comprises 565 residues: Dihydroxy-acid dehydratase (565 aa).

Residue Cys53 participates in [2Fe-2S] cluster binding. Position 85 (Asp85) interacts with Mg(2+). Cys126 provides a ligand contact to [2Fe-2S] cluster. 2 residues coordinate Mg(2+): Asp127 and Lys128. Lys128 carries the N6-carboxylysine modification. Residue Cys198 participates in [2Fe-2S] cluster binding. Glu450 is a Mg(2+) binding site. Ser476 (proton acceptor) is an active-site residue.

The protein belongs to the IlvD/Edd family. Homodimer. The cofactor is [2Fe-2S] cluster. Requires Mg(2+) as cofactor.

The catalysed reaction is (2R)-2,3-dihydroxy-3-methylbutanoate = 3-methyl-2-oxobutanoate + H2O. It carries out the reaction (2R,3R)-2,3-dihydroxy-3-methylpentanoate = (S)-3-methyl-2-oxopentanoate + H2O. It participates in amino-acid biosynthesis; L-isoleucine biosynthesis; L-isoleucine from 2-oxobutanoate: step 3/4. It functions in the pathway amino-acid biosynthesis; L-valine biosynthesis; L-valine from pyruvate: step 3/4. Functions in the biosynthesis of branched-chain amino acids. Catalyzes the dehydration of (2R,3R)-2,3-dihydroxy-3-methylpentanoate (2,3-dihydroxy-3-methylvalerate) into 2-oxo-3-methylpentanoate (2-oxo-3-methylvalerate) and of (2R)-2,3-dihydroxy-3-methylbutanoate (2,3-dihydroxyisovalerate) into 2-oxo-3-methylbutanoate (2-oxoisovalerate), the penultimate precursor to L-isoleucine and L-valine, respectively. The polypeptide is Dihydroxy-acid dehydratase (Synechococcus sp. (strain JA-2-3B'a(2-13)) (Cyanobacteria bacterium Yellowstone B-Prime)).